Here is a 168-residue protein sequence, read N- to C-terminus: GTP-dependent dephospho-CoA kinase (168 aa).

Positions 49, 50, 51, 68, 70, and 120 each coordinate GTP.

This sequence belongs to the GTP-dependent DPCK family.

It carries out the reaction 3'-dephospho-CoA + GTP = GDP + CoA + H(+). The protein operates within cofactor biosynthesis; coenzyme A biosynthesis. In terms of biological role, catalyzes the GTP-dependent phosphorylation of the 3'-hydroxyl group of dephosphocoenzyme A to form coenzyme A (CoA). In Pyrobaculum neutrophilum (strain DSM 2338 / JCM 9278 / NBRC 100436 / V24Sta) (Thermoproteus neutrophilus), this protein is GTP-dependent dephospho-CoA kinase.